Here is a 504-residue protein sequence, read N- to C-terminus: Potassium voltage-gated channel subfamily V member 1 (504 aa).

2 disordered regions span residues 1-22 and 172-193; these read MDLS…GGSL and KKDT…QGPC. Residues 1 to 214 lie on the Cytoplasmic side of the membrane; that stretch reads MDLSPRNRPL…EKPGSSTAAR (214 aa). A compositionally biased stretch (low complexity) spans 10 to 22; it reads LLESSSLDSGGSL. A compositionally biased stretch (basic and acidic residues) spans 172-185; the sequence is KKDTDDQESQHESE. The chain crosses the membrane as a helical span at residues 215 to 235; it reads IFGVISIIFVAVSIVNMALMS. Over 236 to 242 the chain is Extracellular; it reads AELSWLN. The helical transmembrane segment at 243–263 threads the bilayer; it reads LQLLEILEYVCISWFTGEFIL. Residues 264 to 280 are Cytoplasmic-facing; sequence RFLCVKDRCRFLRKVPN. Residues 281–301 traverse the membrane as a helical segment; sequence IIDLLAILPFYITLLVESLSG. Over 302–313 the chain is Extracellular; sequence SHTTQELENVGR. Residues 314-335 form a helical; Voltage-sensor membrane-spanning segment; sequence LVQVLRLLRALRMLKLGRHSTG. The Cytoplasmic portion of the chain corresponds to 336–349; sequence LRSLGMTITQCYEE. The helical transmembrane segment at 350 to 370 threads the bilayer; the sequence is VGLLLLFLSVGISIFSTIEYF. The Selectivity filter signature appears at 396 to 401; it reads TVGYGD. A helical membrane pass occupies residues 411 to 431; the sequence is IVAFMCILSGILVLALPIAII. At 432–504 the chain is on the cytoplasmic side; that stretch reads NDRFSACYFT…RSSGGDDFWF (73 aa).

It belongs to the potassium channel family. V (TC 1.A.1.2) subfamily. Kv8.1/KCNV1 sub-subfamily. In terms of assembly, heteromultimer with KCNB1 and KCNB2. Interacts with KCNC4 and KCND1. In terms of tissue distribution, detected in brain, throughout layers II, IV and VI of the brain cortex. Detected in cerebellum and hippocampus, in the granule cell layer, Purkinje cell layer, pyramidal cell layer and dentate gyrus. Detected at lower levels in olfactory bulb, amygdala, thalamus, hypothalamus, midbrain and brainstem.

The protein resides in the cell membrane. Potassium channel subunit that does not form functional channels by itself. Modulates KCNB1 and KCNB2 channel activity by shifting the threshold for inactivation to more negative values and by slowing the rate of inactivation. Can down-regulate the channel activity of KCNB1, KCNB2, KCNC4 and KCND1, possibly by trapping them in intracellular membranes. This Mesocricetus auratus (Golden hamster) protein is Potassium voltage-gated channel subfamily V member 1 (KCNV1).